Consider the following 272-residue polypeptide: Thiazole synthase (272 aa).

The Schiff-base intermediate with DXP role is filled by lysine 111. 1-deoxy-D-xylulose 5-phosphate contacts are provided by residues glycine 172, 198–199 (AG), and 220–221 (NS). The interval 249 to 272 (SGRLPRRDQASASSPTTGLVQSPQ) is disordered. The segment covering 258 to 272 (ASASSPTTGLVQSPQ) has biased composition (polar residues).

Belongs to the ThiG family. In terms of assembly, homotetramer. Forms heterodimers with either ThiH or ThiS.

The protein localises to the cytoplasm. The catalysed reaction is [ThiS sulfur-carrier protein]-C-terminal-Gly-aminoethanethioate + 2-iminoacetate + 1-deoxy-D-xylulose 5-phosphate = [ThiS sulfur-carrier protein]-C-terminal Gly-Gly + 2-[(2R,5Z)-2-carboxy-4-methylthiazol-5(2H)-ylidene]ethyl phosphate + 2 H2O + H(+). It participates in cofactor biosynthesis; thiamine diphosphate biosynthesis. Catalyzes the rearrangement of 1-deoxy-D-xylulose 5-phosphate (DXP) to produce the thiazole phosphate moiety of thiamine. Sulfur is provided by the thiocarboxylate moiety of the carrier protein ThiS. In vitro, sulfur can be provided by H(2)S. The sequence is that of Thiazole synthase from Synechococcus sp. (strain CC9605).